The chain runs to 105 residues: UPF0235 protein Mext_2130 (105 aa).

Belongs to the UPF0235 family.

The protein is UPF0235 protein Mext_2130 of Methylorubrum extorquens (strain PA1) (Methylobacterium extorquens).